The chain runs to 408 residues: Putative gustatory receptor 58b (408 aa).

Residues 1-44 lie on the Cytoplasmic side of the membrane; sequence MLHPKLGRVMNVVYYHSVVFALMSTTLRIRSCRKCLRLEKVSRT. The chain crosses the membrane as a helical span at residues 45 to 65; the sequence is YTIYSFFVGIFLFLNLYFMVP. Topologically, residues 66–82 are extracellular; the sequence is RIMEDGYMKYNIVLQWN. A helical transmembrane segment spans residues 83 to 103; that stretch reads FFVMLFLRAIAVVSCYGTLWL. The Cytoplasmic portion of the chain corresponds to 104–150; sequence KRHKIIQLYKYSLIYWKRFGHITRAIVDKKELLDLQESLARIMIRKI. Residues 151-171 traverse the membrane as a helical segment; that stretch reads ILLYSAFLCSTVLQYQLLSVI. Topologically, residues 172–193 are extracellular; it reads NPQIFLAFCARLTHFLHFLCVK. Residues 194–214 form a helical membrane-spanning segment; the sequence is MGFFGVLVLLNHQFLVIHLAI. Topologically, residues 215 to 245 are cytoplasmic; sequence NALHGRKARKKWKALRSVAAMHLKTLRLARR. A helical transmembrane segment spans residues 246-266; that stretch reads IFDMFDIANATVFINMFMTAI. The Extracellular segment spans residues 267 to 284; that stretch reads NILYHAVQYSNSSIKSNG. An N-linked (GlcNAc...) asparagine glycan is attached at Asn-277. Residues 285–305 form a helical membrane-spanning segment; sequence WGILFGNGLIVFNFWGTMALM. Residues 306 to 364 are Cytoplasmic-facing; it reads EMLDSVVTSCNNTGQQLRQLSDLPKVGPKMQRELDVFTMQLRQNRLVYKICGIVELDKP. Residues 365–385 traverse the membrane as a helical segment; the sequence is ACLSYIGSILSNVIILMQFDL. Over 386–408 the chain is Extracellular; it reads RRQRQPINDRQYLIHLMKNKTKV. A glycan (N-linked (GlcNAc...) asparagine) is linked at Asn-404.

This sequence belongs to the insect chemoreceptor superfamily. Gustatory receptor (GR) family. Gr22e subfamily. Expressed in the adult labellar chemosensory neurons, labral sense organ and thorax. In larvae, is in neurons of the terminal external chemosensory organ as well as in the dorsal pharyngeal sense organ.

The protein resides in the cell membrane. Its function is as follows. Probable gustatory receptor which mediates acceptance or avoidance behavior, depending on its substrates. This Drosophila melanogaster (Fruit fly) protein is Putative gustatory receptor 58b (Gr58b).